The chain runs to 432 residues: Trigger factor (432 aa).

A PPIase FKBP-type domain is found at 161–246; it reads EDRVTIDFTG…LKKVEERELP (86 aa).

Belongs to the FKBP-type PPIase family. Tig subfamily.

It localises to the cytoplasm. It carries out the reaction [protein]-peptidylproline (omega=180) = [protein]-peptidylproline (omega=0). Functionally, involved in protein export. Acts as a chaperone by maintaining the newly synthesized protein in an open conformation. Functions as a peptidyl-prolyl cis-trans isomerase. This is Trigger factor from Klebsiella pneumoniae subsp. pneumoniae (strain ATCC 700721 / MGH 78578).